The following is a 95-amino-acid chain: Large ribosomal subunit protein bL25 (95 aa).

It belongs to the bacterial ribosomal protein bL25 family. As to quaternary structure, part of the 50S ribosomal subunit; part of the 5S rRNA/L5/L18/L25 subcomplex. Contacts the 5S rRNA. Binds to the 5S rRNA independently of L5 and L18.

Functionally, this is one of the proteins that binds to the 5S RNA in the ribosome where it forms part of the central protuberance. In Haemophilus influenzae (strain 86-028NP), this protein is Large ribosomal subunit protein bL25.